Consider the following 2359-residue polypeptide: MDNTPDTLSISEEAAGLPPIAVVSFACRLPGQNSDPEALWRFLERGQTASNEVPESRFSAQAHYDGTRRPRTMKGRGGMFLHDVDPARFDAPFFNISAVEARSMDPQQRQLLEVVYEALENGGLTLDGISGEQIGCFVSSFTTDFLALQNRDPDDRPINLTTGTKRSIMSNRISHYFNIKGPSMTVDTACSGGLTSVDLACRYLAANDISAAVVAASHLFLNPDELLEEGQVGSVYSRTGLCQVFDAKADGYVKAEAVNAVILKRLDQAVADGDPIRAVIRASASNSNGATVGISTPSAEQQAACIRAAYKRAGISDFNATAYVECHGTGTQAGDPIEVNGLSAVFGGTRDPQAPLILGSVKGNLGHSEPAAGISGLIKAVLSIEKGKIPGQSTLKELNPKIDLLGGALQIPTKTISWPAVPLRRVSVNSFGFGGANAHVIVEEPKGSLGEEWSKPHASSRSSQALASRQSTSKKLYTMVFSAASEESLKRYYTDIKRHLADLNVKVKPSDLAYTLGQRRTHHAYRGYVVTSAANLNRAKVEFGEKGMEPPKVAFVFTGQGSQWPQMGAGLIKNFPCAAKRLRYLDTVLQSTSTPPSWSLVDELSEPRQADYYQKPELSQPLITALQLAILSILEEWGVLPRAVVGHSSGEIAAAYAAGYLSQEQAILAAFYRGQAAAVLGPTIVEPLGMCAVGAGTEQLKQLLPDMPREVQVACVNSPNSVTLSGPKSHLVGVQAQLEAQGTFARLLRVDLAYHSSYVADIAALYKKQLEAEWAKYPAPARASDAAQMFSSVTGHLLDQPCDSEYWRVNMASPVLFSDAAAELVKDSSATLLLEIGPSGALAGPVRQILEGISVKGVQYLAALDRGKDGGEAMHELAGKLYVADYPLSLGAVNFPSADEPTSRPSVLVDLPNYSWDHSAVYWHESDASKDWRFGQFPYHELLGRKILGTPWSAPSWKSIIRLDDMPWLKDHRMAGDPVFPAAGYLAMAIEAVYQARQSVNPIPDVAGVTDLQFVLRDVNFRRALALDSGKDTTVVLAFTEVSDDYTSWTGFRVLSIQEGTSVTHCDGRISVRQVAARAADKETLAPLAYSESAEHWYRALDHRGCTYGPDFQRLLEIECRAGQQETRSTLSRNPPSTGFPQHPYAMHPSTLDICFQSVFPALYSGLRSEIKSLLLPSHLEELTVGPSGGLPAEGETAVSVARAGHSGAGAKEKRRNHYTDASVWSTSTGQLLLEFKGLRFSELNMGDGVDADPALLVPAWLPDFEFLSQDQILTVLRPESAVADVINLVASKKPTLRVGEINLTSDSVSTAWFEGASEGLRGASEHYTYADPDSARLSTVRSSVGDRPNAEFKLLGKDANAIFADPGVDLVIVQYQDLVATAQTSVLERIKPSEAKGDVVYLFVQRSATTPSGEDADEALLQDAGFNTLFKIPIDGSSFAYLSRSIELATPPSEQEEPQVISIISADPQSGLLNTFTESLTEAGYAVQLQTTFGAPTNDVKAVVVLDDFSSPVLGDVTDEQWTSIRDLVLKAPSTIWVTQGAQHKVTNPNNALIHGLSRSIRSENPAVRLVTLDVESKSPRDNSVTILKLLDSIASREGGSGEDSEFVERDGILHVSRTLRKADAEELNVNDAPATAPNAQSLLDNAKHVKLGITNLGSFDSLELYEATGEEPPLAADQVEIEVYATGLNYKDVQISTGAIPGDDQALGFDGAGSVTKVGQNVHTFRVGDKVAFTDSGAFANRVRTTYKRVHHVPDGMALEVAAALPLSFMTAIYALVNIAGLRKGQSVLIHSGAGGVGIAAIQLAQYLQAEIYVTVGSDEKRSFLQEHLNIPASRIFSSRTTEFADAIIASTKGRGVDVILNSLTGELLDETWRICADGGILVDIGRGLRGRRLAPGPFERNCLVKAFDLTSKQVSDDIVRSLLTQAFGLFEKQHLQLIHPVRAFSYAEIRQAFEHLSTGRHVGKVVVSHGSDNGAVPIRPAPSLSVIRKDRSYLITGGLHGIGGTLAEYLALRGAKCIVVLSRSGSSTPRAAWIVETCRRLGCEIQVVKGDVTSYESIKGALQQAKLPVCGIVHGAMVLLDKPYELMDADSYRRCIAPKVRGAWNLHQAAEELGLELDFFTLLSSISGVIGQSGQANYAAANSFLDSFAAYRRGLGLPALSLDIGAVQDTGVAMENPGLLHYFTDPQWLNIEQGELFYLMDASIKEQQNARNAPSSQLIMALSFPLPATSDLLNDIRFRTLSRAGTSNQPAQNSANQESQAVTDFLCMQSSGADSTALTEAAIELFQSQLLRMLRLDEPIKANKPLSAYGMDSLSAVKLRNWVEKSFSVTFAVFEILGANGLQALCSKLITRLQTV.

Residues 17 to 444 (LPPIAVVSFA…GANAHVIVEE (428 aa)) enclose the Ketosynthase family 3 (KS3) domain. Residues Cys-190, His-327, and His-367 each act as for beta-ketoacyl synthase activity in the active site. Residues 556–868 (VFTGQGSQWP…QYLAALDRGK (313 aa)) form a malonyl-CoA:ACP transacylase (MAT) domain region. The For malonyltransferase activity role is filled by Ser-648. The segment at 940-1077 (HELLGRKILG…GRISVRQVAA (138 aa)) is N-terminal hotdog fold. A dehydratase (DH) domain region spans residues 940–1245 (HELLGRKILG…FKGLRFSELN (306 aa)). In terms of domain architecture, PKS/mFAS DH spans 940-1250 (HELLGRKILG…FSELNMGDGV (311 aa)). The active-site Proton acceptor; for dehydratase activity is His-972. Residues 1089–1250 (AYSESAEHWY…FSELNMGDGV (162 aa)) form a C-terminal hotdog fold region. The active-site Proton donor; for dehydratase activity is the Asp-1153. Residues 1659 to 1970 (GSFDSLELYE…TGRHVGKVVV (312 aa)) are enoyl reductase (ER) domain. Residues 1995 to 2172 (SYLITGGLHG…LSLDIGAVQD (178 aa)) are ketoreductase (KR) domain. Positions 2280-2356 (ALTEAAIELF…ALCSKLITRL (77 aa)) constitute a Carrier domain. Ser-2316 bears the O-(pantetheine 4'-phosphoryl)serine mark.

It functions in the pathway secondary metabolite biosynthesis; terpenoid biosynthesis. Functionally, low-reducing polyketide synthase; part of the gene cluster that mediates the biosynthesis of various drimane-type sesquiterpene esters, compounds that exhibit diverse biological activities and are widely present in eukaryotes. The pathway begins with the synthesis of the backbone drimenol by the terpene cyclase drtB using farnesyl pyrophosphate (FPP) as substrate. The cytochrome P450 monooxygenase drtD is then responsible for the hydroxylations at C-6, C-9 and C-12, as well as the oxidation of hydroxyl groups at C-6 and C-11 to a ketone and an aldehyde, respectively. Then, the biosynthesis can go in two directions, either the hydroxylated drimenol is further hydroxylated at C-2 and C-3 by an enzyme(s) not associated with the drt cluster, or the FAD-binding oxidoreductase drtC further oxidizes C-11 or C-12 to form the butyrolactone ring. DrtB, drtD and drtC are solely responsible for the formation of the different drimane structures observed during drimane sesquiterpenes biosynthesis. The polyketide synthase drtA synthesizes different lengths (C6 and C8) of PKS chains, which are then oxidized to varying degrees by the short-chain dehydrogenase drtF. Finally, these PKS chains are transferred onto drimane sesquiterpenes by the acyltransferase drtE, forming the sesquiterpene esters. In addition to the different fatty acyl-CoA chains produced by drtA, drtE is also able to use cinnamoyl-CoA as a substrate. The sequence is that of Low-reducing polyketide synthase drtA from Aspergillus calidoustus.